Reading from the N-terminus, the 135-residue chain is Ribosome-binding factor A (135 aa).

The protein belongs to the RbfA family. In terms of assembly, monomer. Binds 30S ribosomal subunits, but not 50S ribosomal subunits or 70S ribosomes.

It localises to the cytoplasm. Its function is as follows. One of several proteins that assist in the late maturation steps of the functional core of the 30S ribosomal subunit. Associates with free 30S ribosomal subunits (but not with 30S subunits that are part of 70S ribosomes or polysomes). Required for efficient processing of 16S rRNA. May interact with the 5'-terminal helix region of 16S rRNA. The protein is Ribosome-binding factor A of Bartonella quintana (strain Toulouse) (Rochalimaea quintana).